Reading from the N-terminus, the 52-residue chain is UPF0181 protein HD_1137 (52 aa).

The protein belongs to the UPF0181 family.

The sequence is that of UPF0181 protein HD_1137 from Haemophilus ducreyi (strain 35000HP / ATCC 700724).